The sequence spans 301 residues: Recombination-associated protein RdgC (301 aa).

The protein belongs to the RdgC family.

The protein localises to the cytoplasm. It localises to the nucleoid. May be involved in recombination. This chain is Recombination-associated protein RdgC, found in Xanthomonas axonopodis pv. citri (strain 306).